The primary structure comprises 276 residues: Bis(5'-nucleosyl)-tetraphosphatase, symmetrical (276 aa).

This sequence belongs to the Ap4A hydrolase family.

It carries out the reaction P(1),P(4)-bis(5'-adenosyl) tetraphosphate + H2O = 2 ADP + 2 H(+). Its function is as follows. Hydrolyzes diadenosine 5',5'''-P1,P4-tetraphosphate to yield ADP. This Tolumonas auensis (strain DSM 9187 / NBRC 110442 / TA 4) protein is Bis(5'-nucleosyl)-tetraphosphatase, symmetrical.